A 286-amino-acid chain; its full sequence is tRNA (guanine-N(7)-)-methyltransferase (286 aa).

Residues Glu-91, Glu-116, Asn-143, and Asp-165 each coordinate S-adenosyl-L-methionine. Residue Asp-165 is part of the active site. Residues Lys-169, Asp-201, and 262–265 (TNFE) contribute to the substrate site.

It belongs to the class I-like SAM-binding methyltransferase superfamily. TrmB family.

It carries out the reaction guanosine(46) in tRNA + S-adenosyl-L-methionine = N(7)-methylguanosine(46) in tRNA + S-adenosyl-L-homocysteine. It functions in the pathway tRNA modification; N(7)-methylguanine-tRNA biosynthesis. Functionally, catalyzes the formation of N(7)-methylguanine at position 46 (m7G46) in tRNA. In Bifidobacterium longum subsp. infantis (strain ATCC 15697 / DSM 20088 / JCM 1222 / NCTC 11817 / S12), this protein is tRNA (guanine-N(7)-)-methyltransferase.